Reading from the N-terminus, the 502-residue chain is Probable cytosol aminopeptidase (502 aa).

Positions 265 and 270 each coordinate Mn(2+). Lys277 is a catalytic residue. Asp288, Asp347, and Glu349 together coordinate Mn(2+). The active site involves Arg351.

The protein belongs to the peptidase M17 family. The cofactor is Mn(2+).

Its subcellular location is the cytoplasm. It carries out the reaction Release of an N-terminal amino acid, Xaa-|-Yaa-, in which Xaa is preferably Leu, but may be other amino acids including Pro although not Arg or Lys, and Yaa may be Pro. Amino acid amides and methyl esters are also readily hydrolyzed, but rates on arylamides are exceedingly low.. The catalysed reaction is Release of an N-terminal amino acid, preferentially leucine, but not glutamic or aspartic acids.. Its function is as follows. Presumably involved in the processing and regular turnover of intracellular proteins. Catalyzes the removal of unsubstituted N-terminal amino acids from various peptides. The chain is Probable cytosol aminopeptidase from Rickettsia bellii (strain RML369-C).